The chain runs to 151 residues: Nucleoside diphosphate kinase (151 aa).

The ATP site is built by Lys11, Phe59, Arg87, Thr93, Arg104, and Asn114. His117 acts as the Pros-phosphohistidine intermediate in catalysis.

The protein belongs to the NDK family. Homotetramer. The cofactor is Mg(2+).

The protein localises to the cytoplasm. It catalyses the reaction a 2'-deoxyribonucleoside 5'-diphosphate + ATP = a 2'-deoxyribonucleoside 5'-triphosphate + ADP. It carries out the reaction a ribonucleoside 5'-diphosphate + ATP = a ribonucleoside 5'-triphosphate + ADP. Major role in the synthesis of nucleoside triphosphates other than ATP. The ATP gamma phosphate is transferred to the NDP beta phosphate via a ping-pong mechanism, using a phosphorylated active-site intermediate. In Prochlorococcus marinus (strain SARG / CCMP1375 / SS120), this protein is Nucleoside diphosphate kinase.